The following is a 249-amino-acid chain: V-type proton ATPase subunit D 2 (249 aa).

This sequence belongs to the V-ATPase D subunit family. V-ATPase is a heteromultimeric enzyme made up of two complexes: the ATP-hydrolytic V1 complex and the proton translocation V0 complex. The V1 complex consists of three catalytic AB heterodimers that form a heterohexamer, three peripheral stalks each consisting of EG heterodimers, one central rotor including subunits D and F, and the regulatory subunits C and H. The proton translocation complex V0 consists of the proton transport subunit a, a ring of proteolipid subunits c9c'', rotary subunit d, subunits e and f, and the accessory subunits VhaAC45 and ATP6AP2.

Subunit of the V1 complex of vacuolar(H+)-ATPase (V-ATPase), a multisubunit enzyme composed of a peripheral complex (V1) that hydrolyzes ATP and a membrane integral complex (V0) that translocates protons. V-ATPase is responsible for acidifying and maintaining the pH of intracellular compartments and in some cell types, is targeted to the plasma membrane, where it is responsible for acidifying the extracellular environment. This chain is V-type proton ATPase subunit D 2 (Vha36-3), found in Drosophila melanogaster (Fruit fly).